A 488-amino-acid polypeptide reads, in one-letter code: L-amino oxidase (488 aa).

FAD is bound by residues 60-61 (MS), 80-81 (EA), Arg88, and 104-107 (GPMR). 2 residues coordinate substrate: Arg107 and Tyr388. Cys347 and Cys428 are disulfide-bonded. FAD contacts are provided by residues Glu474 and 481-486 (GWIDST). 481–482 (GW) contacts substrate.

It belongs to the flavin monoamine oxidase family. FIG1 subfamily. In terms of assembly, monomer. This is in contrast with most of its orthologs, that are non-covalently linked homodimers. Requires FAD as cofactor. In terms of processing, N-glycosylated. As to expression, expressed by the venom gland.

The protein resides in the secreted. The enzyme catalyses an L-alpha-amino acid + O2 + H2O = a 2-oxocarboxylate + H2O2 + NH4(+). The catalysed reaction is L-leucine + O2 + H2O = 4-methyl-2-oxopentanoate + H2O2 + NH4(+). In terms of biological role, catalyzes an oxidative deamination of predominantly hydrophobic and aromatic L-amino acids, thus producing hydrogen peroxide that may contribute to the diverse toxic effects of this enzyme. Shows activity on L-Leu. Exhibits diverse biological activities, such as hemorrhage, hemolysis, edema, antibacterial and antiparasitic activities, as well as regulation of platelet aggregation. When tested on SW480 and SW620 human colon cancer cells, shows inhibition of cell proliferation, and induction of apoptosis, which is probably a consequence of the increased caspase-3 activity and the decreased Bcl-2 expression. This is L-amino oxidase from Trimeresurus purpureomaculatus (Mangrove pit viper).